We begin with the raw amino-acid sequence, 583 residues long: Aspartate--tRNA(Asp/Asn) ligase (583 aa).

Position 171 (Glu-171) interacts with L-aspartate. The interval 195–198 (QLFK) is aspartate. Arg-217 is a binding site for L-aspartate. ATP-binding positions include 217-219 (RDE) and Gln-226. His-443 contacts L-aspartate. Glu-476 lines the ATP pocket. Arg-483 contacts L-aspartate. 528-531 (GLDR) lines the ATP pocket.

The protein belongs to the class-II aminoacyl-tRNA synthetase family. Type 1 subfamily. As to quaternary structure, homodimer.

The protein resides in the cytoplasm. It catalyses the reaction tRNA(Asx) + L-aspartate + ATP = L-aspartyl-tRNA(Asx) + AMP + diphosphate. Its function is as follows. Aspartyl-tRNA synthetase with relaxed tRNA specificity since it is able to aspartylate not only its cognate tRNA(Asp) but also tRNA(Asn). Reaction proceeds in two steps: L-aspartate is first activated by ATP to form Asp-AMP and then transferred to the acceptor end of tRNA(Asp/Asn). This chain is Aspartate--tRNA(Asp/Asn) ligase, found in Ruthia magnifica subsp. Calyptogena magnifica.